Here is a 51-residue protein sequence, read N- to C-terminus: uncharacterized protein (51 aa).

The interval 1-28 (MQQPQNITTSSISNNNNNNTSLTLQQQQ) is disordered. Residues 13–47 (SNNNNNNTSLTLQQQQEQLQQLQIKRKRNLMKQLQ) are a coiled coil.

This is an uncharacterized protein from Dictyostelium discoideum (Social amoeba).